A 270-amino-acid chain; its full sequence is Imidazole glycerol phosphate synthase subunit HisF (270 aa).

Residues Asp-11 and Asp-135 contribute to the active site.

Belongs to the HisA/HisF family. As to quaternary structure, heterodimer of HisH and HisF.

The protein resides in the cytoplasm. It carries out the reaction 5-[(5-phospho-1-deoxy-D-ribulos-1-ylimino)methylamino]-1-(5-phospho-beta-D-ribosyl)imidazole-4-carboxamide + L-glutamine = D-erythro-1-(imidazol-4-yl)glycerol 3-phosphate + 5-amino-1-(5-phospho-beta-D-ribosyl)imidazole-4-carboxamide + L-glutamate + H(+). It functions in the pathway amino-acid biosynthesis; L-histidine biosynthesis; L-histidine from 5-phospho-alpha-D-ribose 1-diphosphate: step 5/9. IGPS catalyzes the conversion of PRFAR and glutamine to IGP, AICAR and glutamate. The HisF subunit catalyzes the cyclization activity that produces IGP and AICAR from PRFAR using the ammonia provided by the HisH subunit. This Haloquadratum walsbyi (strain DSM 16790 / HBSQ001) protein is Imidazole glycerol phosphate synthase subunit HisF.